The primary structure comprises 201 residues: FMN-dependent NADH:quinone oxidoreductase (201 aa).

FMN-binding positions include Ser-10, Ser-16 to Ser-18, Met-96 to Phe-99, and Ser-140 to Gly-143.

Belongs to the azoreductase type 1 family. As to quaternary structure, homodimer. Requires FMN as cofactor.

It carries out the reaction 2 a quinone + NADH + H(+) = 2 a 1,4-benzosemiquinone + NAD(+). The catalysed reaction is N,N-dimethyl-1,4-phenylenediamine + anthranilate + 2 NAD(+) = 2-(4-dimethylaminophenyl)diazenylbenzoate + 2 NADH + 2 H(+). Quinone reductase that provides resistance to thiol-specific stress caused by electrophilic quinones. In terms of biological role, also exhibits azoreductase activity. Catalyzes the reductive cleavage of the azo bond in aromatic azo compounds to the corresponding amines. The chain is FMN-dependent NADH:quinone oxidoreductase from Escherichia coli O157:H7.